Here is a 460-residue protein sequence, read N- to C-terminus: Lipase member H-B (460 aa).

An N-terminal signal peptide occupies residues 1–26 (MLLSFYFNGLLLVGCLLSWGRSDTEG). N-linked (GlcNAc...) asparagine glycosylation is found at N67 and N75. S163 (nucleophile) is an active-site residue. The N-linked (GlcNAc...) asparagine glycan is linked to N177. The Charge relay system role is filled by D187. Residues C242 and C255 are joined by a disulfide bond. H257 serves as the catalytic Charge relay system. 2 disulfide bridges follow: C279-C290 and C293-C301. N-linked (GlcNAc...) asparagine glycosylation occurs at N289. A glycan (N-linked (GlcNAc...) asparagine) is linked at N366. Cysteines 436 and 455 form a disulfide.

This sequence belongs to the AB hydrolase superfamily. Lipase family.

The protein resides in the secreted. Its subcellular location is the cell membrane. The enzyme catalyses 1-hexadecanoyl-2-(9Z-octadecenoyl)-sn-glycero-3-phosphate + H2O = 2-(9Z-octadecenoyl)-sn-glycero-3-phosphate + hexadecanoate + H(+). In terms of biological role, hydrolyzes specifically phosphatidic acid (PA) to produce 2-acyl lysophosphatidic acid (LPA; a potent bioactive lipid mediator) and fatty acid. Does not hydrolyze other phospholipids, like phosphatidylserine (PS), phosphatidylcholine (PC) and phosphatidylethanolamine (PE) or triacylglycerol (TG). This Xenopus laevis (African clawed frog) protein is Lipase member H-B (liph-b).